Here is a 351-residue protein sequence, read N- to C-terminus: Porphobilinogen deaminase (351 aa).

Position 242 is an S-(dipyrrolylmethanemethyl)cysteine (Cys242).

Belongs to the HMBS family. In terms of assembly, monomer. Dipyrromethane serves as cofactor.

The enzyme catalyses 4 porphobilinogen + H2O = hydroxymethylbilane + 4 NH4(+). It participates in porphyrin-containing compound metabolism; protoporphyrin-IX biosynthesis; coproporphyrinogen-III from 5-aminolevulinate: step 2/4. In terms of biological role, tetrapolymerization of the monopyrrole PBG into the hydroxymethylbilane pre-uroporphyrinogen in several discrete steps. The chain is Porphobilinogen deaminase from Rickettsia africae (strain ESF-5).